A 463-amino-acid chain; its full sequence is Xanthine permease XanP (463 aa).

12 consecutive transmembrane segments (helical) span residues L43–L63, I71–G91, V93–M113, P126–I146, I156–V176, T192–L212, V222–L242, L260–I280, G352–V372, V379–V399, I409–L429, and L439–P459.

This sequence belongs to the nucleobase:cation symporter-2 (NCS2) (TC 2.A.40) family.

It is found in the cell inner membrane. The catalysed reaction is xanthine(in) + H(+)(in) = xanthine(out) + H(+)(out). Functionally, specific, proton motive force-dependent high-affinity transporter for xanthine. This Escherichia coli O6:H1 (strain CFT073 / ATCC 700928 / UPEC) protein is Xanthine permease XanP (xanP).